The sequence spans 571 residues: Potassium-transporting ATPase potassium-binding subunit (571 aa).

A run of 12 helical transmembrane segments spans residues 5-25 (LAAG…YVPV), 60-80 (YGYA…LYAL), 86-106 (VLPL…NTAV), 131-151 (GLAV…VALI), 177-197 (ILLP…VIQS), 247-267 (PTPV…VSLT), 291-311 (LTLL…TLAA), 334-354 (FGIP…TGAV), 386-406 (GLYG…LLVG), 425-445 (ALSV…TVIL), 498-518 (ALGL…LALA), and 547-567 (GTVV…GPIA).

This sequence belongs to the KdpA family. As to quaternary structure, the system is composed of three essential subunits: KdpA, KdpB and KdpC.

Its subcellular location is the cell membrane. In terms of biological role, part of the high-affinity ATP-driven potassium transport (or Kdp) system, which catalyzes the hydrolysis of ATP coupled with the electrogenic transport of potassium into the cytoplasm. This subunit binds the extracellular potassium ions and delivers the ions to the membrane domain of KdpB through an intramembrane tunnel. The sequence is that of Potassium-transporting ATPase potassium-binding subunit from Rhodococcus jostii (strain RHA1).